The primary structure comprises 501 residues: IQ domain-containing protein M (501 aa).

Residues 237 to 247 (ERQPIKPEPKS) are compositionally biased toward basic and acidic residues. The tract at residues 237 to 262 (ERQPIKPEPKSQPRIKGTPNKTDKLD) is disordered. An IQ domain is found at 290–319 (LIRMVTVMQAHVRGWLERKRLQRVMTKALD).

This is IQ domain-containing protein M from Homo sapiens (Human).